We begin with the raw amino-acid sequence, 113 residues long: Holo-[acyl-carrier-protein] synthase (113 aa).

Mg(2+)-binding residues include Asp5 and Glu50.

The protein belongs to the P-Pant transferase superfamily. AcpS family. Mg(2+) is required as a cofactor.

The protein resides in the cytoplasm. The catalysed reaction is apo-[ACP] + CoA = holo-[ACP] + adenosine 3',5'-bisphosphate + H(+). Functionally, transfers the 4'-phosphopantetheine moiety from coenzyme A to a Ser of acyl-carrier-protein. The sequence is that of Holo-[acyl-carrier-protein] synthase from Nautilia profundicola (strain ATCC BAA-1463 / DSM 18972 / AmH).